The primary structure comprises 367 residues: Putative zinc metalloprotease mll0638 (367 aa).

Zn(2+) is bound at residue histidine 20. Glutamate 21 is a catalytic residue. Residue histidine 24 participates in Zn(2+) binding. 3 helical membrane-spanning segments follow: residues 108–130 (ATVVAGPLFNFLLTIVVFSVLFA), 291–313 (LGFEWLVQLVALLSVGIGFLNLL), and 343–365 (MAYRAGLLLVLCFMGFVFWNDLF). The PDZ domain maps to 121 to 196 (TIVVFSVLFA…ITFVMLRDGK (76 aa)).

It belongs to the peptidase M50B family. Requires Zn(2+) as cofactor.

It is found in the cell inner membrane. This Mesorhizobium japonicum (strain LMG 29417 / CECT 9101 / MAFF 303099) (Mesorhizobium loti (strain MAFF 303099)) protein is Putative zinc metalloprotease mll0638.